The chain runs to 102 residues: Integration host factor subunit alpha (102 aa).

It belongs to the bacterial histone-like protein family. In terms of assembly, heterodimer of an alpha and a beta chain.

In terms of biological role, this protein is one of the two subunits of integration host factor, a specific DNA-binding protein that functions in genetic recombination as well as in transcriptional and translational control. In Paracoccus denitrificans (strain Pd 1222), this protein is Integration host factor subunit alpha.